A 298-amino-acid chain; its full sequence is MGRAPCCDKANVKRGPWSPEEDAKLKDYIEKQGTGGNWIALPHKAGLRRCGKSCRLRWLNYLRPNIRHGDFTEEEDNIIYSLFASIGSRWSVIAAHLQGRTDNDIKNYWNTKLKKKLIATMAPPPHHHLAIATSSSSASPSSSSHYNMINSLLPYNPSTNQLLTPHQGIMMTMMGQQQQLFYQEDMGNLVNSPNRNNLIMSHQEDNQEQSTNKGIMLLSDVRSGSSTTSTVTRVKMEHRDHDDHHHHHEEDERSMTSVVMEDYGMEEIKQLISSSCTSSNNSLWFDENKTEDKFMLYY.

HTH myb-type domains lie at 9 to 62 and 63 to 117; these read KANV…LNYL and RPNI…KKKL. 2 consecutive DNA-binding regions (H-T-H motif) follow at residues 38-62 and 90-113; these read WIAL…LNYL and WSVI…NTKL.

In terms of tissue distribution, ubiquitous, with higher levels in roots, flowers, and shoot tips. Found in all cells of the shoot tips.

The protein resides in the nucleus. Its function is as follows. Transcription activator. Positively regulates axillary meristems (AMs) formation and development, especially during inflorescence. The chain is Transcription factor RAX2 (RAX2) from Arabidopsis thaliana (Mouse-ear cress).